The following is a 117-amino-acid chain: UPF0102 protein RSKD131_0118 (117 aa).

It belongs to the UPF0102 family.

This Cereibacter sphaeroides (strain KD131 / KCTC 12085) (Rhodobacter sphaeroides) protein is UPF0102 protein RSKD131_0118.